A 466-amino-acid chain; its full sequence is ATP synthase subunit beta (466 aa).

An ATP-binding site is contributed by 153-160 (GGAGVGKT).

The protein belongs to the ATPase alpha/beta chains family. In terms of assembly, F-type ATPases have 2 components, CF(1) - the catalytic core - and CF(0) - the membrane proton channel. CF(1) has five subunits: alpha(3), beta(3), gamma(1), delta(1), epsilon(1). CF(0) has three main subunits: a(1), b(2) and c(9-12). The alpha and beta chains form an alternating ring which encloses part of the gamma chain. CF(1) is attached to CF(0) by a central stalk formed by the gamma and epsilon chains, while a peripheral stalk is formed by the delta and b chains.

It is found in the cell membrane. The enzyme catalyses ATP + H2O + 4 H(+)(in) = ADP + phosphate + 5 H(+)(out). Produces ATP from ADP in the presence of a proton gradient across the membrane. The catalytic sites are hosted primarily by the beta subunits. This is ATP synthase subunit beta from Oenococcus oeni (strain ATCC BAA-331 / PSU-1).